The primary structure comprises 64 residues: Large ribosomal subunit protein bL28 (64 aa).

Belongs to the bacterial ribosomal protein bL28 family.

The polypeptide is Large ribosomal subunit protein bL28 (Campylobacter lari (strain RM2100 / D67 / ATCC BAA-1060)).